Here is a 316-residue protein sequence, read N- to C-terminus: Acetyl-coenzyme A carboxylase carboxyl transferase subunit beta (316 aa).

The 270-residue stretch at 39 to 308 (LWHKCSKCGV…PPHMVLWETM (270 aa)) folds into the CoA carboxyltransferase N-terminal domain. Residues cysteine 43, cysteine 46, cysteine 62, and cysteine 65 each contribute to the Zn(2+) site. The segment at 43–65 (CSKCGVLAYTKDLKANQMVCIEC) adopts a C4-type zinc-finger fold.

This sequence belongs to the AccD/PCCB family. In terms of assembly, acetyl-CoA carboxylase is a heterohexamer composed of biotin carboxyl carrier protein (AccB), biotin carboxylase (AccC) and two subunits each of ACCase subunit alpha (AccA) and ACCase subunit beta (AccD). Requires Zn(2+) as cofactor.

Its subcellular location is the cytoplasm. It catalyses the reaction N(6)-carboxybiotinyl-L-lysyl-[protein] + acetyl-CoA = N(6)-biotinyl-L-lysyl-[protein] + malonyl-CoA. The protein operates within lipid metabolism; malonyl-CoA biosynthesis; malonyl-CoA from acetyl-CoA: step 1/1. In terms of biological role, component of the acetyl coenzyme A carboxylase (ACC) complex. Biotin carboxylase (BC) catalyzes the carboxylation of biotin on its carrier protein (BCCP) and then the CO(2) group is transferred by the transcarboxylase to acetyl-CoA to form malonyl-CoA. The sequence is that of Acetyl-coenzyme A carboxylase carboxyl transferase subunit beta from Nostoc punctiforme (strain ATCC 29133 / PCC 73102).